The chain runs to 251 residues: MWRLLSGARAPVLRATLSDSWAAPPARAGLKTLLPVPTFEDVSIPEKPKLRFVERAPLVPKVRREPKNLRDIRGPSTEATEFTEGNFAILALGGGYLHWGHFEMMRLTINRFMDPKNMFALWRVPAPFKAITRKGMGQRMGGGKGAIDHYVTPVKAGRLIVEVGGRCEFQEVQGILNQVAHKLPFPAKAVSRETLEKIQKDQEERERNNQNPWTFERIATANMLGIRKVLSPYDLTHRGRYWGKFYMPERV.

A mitochondrion-targeting transit peptide spans 1–29 (MWRLLSGARAPVLRATLSDSWAAPPARAG).

The protein belongs to the universal ribosomal protein uL16 family. In terms of assembly, component of the mitochondrial ribosome large subunit (39S) which comprises a 16S rRNA and about 50 distinct proteins.

Its subcellular location is the mitochondrion. This Bos taurus (Bovine) protein is Large ribosomal subunit protein uL16m (MRPL16).